The sequence spans 156 residues: Small ribosomal subunit protein uS7 (156 aa).

It belongs to the universal ribosomal protein uS7 family. As to quaternary structure, part of the 30S ribosomal subunit. Contacts proteins S9 and S11.

One of the primary rRNA binding proteins, it binds directly to 16S rRNA where it nucleates assembly of the head domain of the 30S subunit. Is located at the subunit interface close to the decoding center, probably blocks exit of the E-site tRNA. The polypeptide is Small ribosomal subunit protein uS7 (Streptococcus gordonii (strain Challis / ATCC 35105 / BCRC 15272 / CH1 / DL1 / V288)).